A 68-amino-acid polypeptide reads, in one-letter code: 1-carboxybiuret hydrolase subunit AtzG (68 aa).

Heterotetramer consisting of 2 AtzE and 2 AtzG subunits.

Its pathway is xenobiotic degradation; atrazine degradation. Its function is as follows. Important for the activity of the AtzE subunit of 1-carboxybiuret hydrolase. The chain is 1-carboxybiuret hydrolase subunit AtzG from Pseudomonas sp. (strain ADP).